The following is a 71-amino-acid chain: Hainantoxin-X-2 (71 aa).

The first 26 residues, 1 to 26 (MKTAIFTVVLALAVFAVLCLVVSTHA), serve as a signal peptide directing secretion. Residues 27–43 (ERHSKTDMEDSPMIQER) constitute a propeptide that is removed on maturation. Cystine bridges form between Cys52–Cys65 and Cys61–Cys70.

The protein belongs to the neurotoxin 36 family. 02 subfamily. In terms of tissue distribution, expressed by the venom gland.

It localises to the secreted. Reversibly blocks N-type calcium channels (Cav2.2/CACNA1B) in rat dorsal root ganglion cells. Elicits no toxic symptoms in either vertebrates or invertebrates during a period of 48 hours post-injection, when it was assayed in vivo by direct injection into mice and cockroaches. The chain is Hainantoxin-X-2 from Cyriopagopus hainanus (Chinese bird spider).